The sequence spans 106 residues: Iron-sulfur cluster assembly protein CyaY (106 aa).

The protein belongs to the frataxin family.

Functionally, involved in iron-sulfur (Fe-S) cluster assembly. May act as a regulator of Fe-S biogenesis. The protein is Iron-sulfur cluster assembly protein CyaY of Salmonella arizonae (strain ATCC BAA-731 / CDC346-86 / RSK2980).